The primary structure comprises 670 residues: Methionine--tRNA ligase (670 aa).

Positions 14 to 24 match the 'HIGH' region motif; sequence PYANGHLHLGH. Zn(2+) is bound by residues Cys-145, Cys-148, Cys-158, and Cys-161. Residues 330–334 carry the 'KMSKS' region motif; that stretch reads KMSKS. Residue Lys-333 participates in ATP binding. Positions 570–670 constitute a tRNA-binding domain; that stretch reads DFAKVDLRIA…AGALPGMKVK (101 aa).

Belongs to the class-I aminoacyl-tRNA synthetase family. MetG type 1 subfamily. In terms of assembly, homodimer. Zn(2+) serves as cofactor.

Its subcellular location is the cytoplasm. The enzyme catalyses tRNA(Met) + L-methionine + ATP = L-methionyl-tRNA(Met) + AMP + diphosphate. In terms of biological role, is required not only for elongation of protein synthesis but also for the initiation of all mRNA translation through initiator tRNA(fMet) aminoacylation. The polypeptide is Methionine--tRNA ligase (Legionella pneumophila subsp. pneumophila (strain Philadelphia 1 / ATCC 33152 / DSM 7513)).